Consider the following 337-residue polypeptide: 3-isopropylmalate dehydrogenase (337 aa).

The substrate site is built by Arg86, Arg96, Arg117, and Asp201. Mg(2+) is bound by residues Asp201, Asp225, and Asp229. An NAD(+)-binding site is contributed by 258–270 (GAAFDIAGKNIGN).

It belongs to the isocitrate and isopropylmalate dehydrogenases family. In terms of assembly, homotetramer. The cofactor is Mg(2+). It depends on Mn(2+) as a cofactor.

The protein resides in the cytoplasm. The catalysed reaction is (2R,3S)-3-isopropylmalate + NAD(+) = 4-methyl-2-oxopentanoate + CO2 + NADH. Its pathway is amino-acid biosynthesis; L-leucine biosynthesis; L-leucine from 3-methyl-2-oxobutanoate: step 3/4. Its function is as follows. Catalyzes the oxidation of 3-carboxy-2-hydroxy-4-methylpentanoate (3-isopropylmalate) to 3-carboxy-4-methyl-2-oxopentanoate. The product decarboxylates to 4-methyl-2 oxopentanoate. This chain is 3-isopropylmalate dehydrogenase (leuB), found in Sulfurisphaera tokodaii (strain DSM 16993 / JCM 10545 / NBRC 100140 / 7) (Sulfolobus tokodaii).